A 118-amino-acid polypeptide reads, in one-letter code: DNA-binding protein Msm_0708 (118 aa).

Positions 16–39 are disordered; that stretch reads EARQAAAQGQMQQQAQQQMQQQEA. Over residues 18 to 39 the composition is skewed to low complexity; the sequence is RQAAAQGQMQQQAQQQMQQQEA.

Belongs to the PDCD5 family.

This is DNA-binding protein Msm_0708 from Methanobrevibacter smithii (strain ATCC 35061 / DSM 861 / OCM 144 / PS).